The following is a 403-amino-acid chain: Phosphoglycerate kinase (403 aa).

Residues 21 to 23 (DFN), Arg-36, 59 to 62 (HLGR), Arg-119, and Arg-159 each bind substrate. Residues Lys-214, Gly-301, Glu-332, and 359-362 (GGDS) each bind ATP.

Belongs to the phosphoglycerate kinase family. In terms of assembly, monomer.

It is found in the cytoplasm. The catalysed reaction is (2R)-3-phosphoglycerate + ATP = (2R)-3-phospho-glyceroyl phosphate + ADP. It participates in carbohydrate degradation; glycolysis; pyruvate from D-glyceraldehyde 3-phosphate: step 2/5. This chain is Phosphoglycerate kinase, found in Lactobacillus delbrueckii subsp. bulgaricus (strain ATCC 11842 / DSM 20081 / BCRC 10696 / JCM 1002 / NBRC 13953 / NCIMB 11778 / NCTC 12712 / WDCM 00102 / Lb 14).